Reading from the N-terminus, the 311-residue chain is Mitochondrial ribosome-associated GTPase 1 (311 aa).

The region spanning 27–200 (AKGLKQMKTK…LFDTPGVLSP (174 aa)) is the CP-type G domain. GTP-binding positions include 74–77 (NKMD), 144–149 (NVGKSS), and glycine 196.

This sequence belongs to the TRAFAC class YlqF/YawG GTPase family. MTG1 subfamily.

The protein localises to the mitochondrion inner membrane. In terms of biological role, plays a role in the regulation of the mitochondrial ribosome assembly and of translational activity. Displays mitochondrial GTPase activity. The protein is Mitochondrial ribosome-associated GTPase 1 of Xenopus tropicalis (Western clawed frog).